The following is an 898-amino-acid chain: Serine/threonine-protein kinase TAO3 (898 aa).

The 254-residue stretch at 24-277 (FIGLHEIGHG…SAELLRHDFV (254 aa)) folds into the Protein kinase domain. ATP contacts are provided by residues 30–38 (IGHGSFGAV) and Lys-53. The Proton acceptor role is filled by Asp-147. Disordered stretches follow at residues 316–362 (TRNG…SQSS) and 405–425 (DEAG…VQSQ). Position 324 is a phosphoserine; by ATM (Ser-324). A phosphoserine mark is found at Ser-331, Ser-343, Ser-346, and Ser-349. The span at 334–351 (GTSLNREMDSLGSNHSIP) shows a compositional bias: polar residues. The span at 352–362 (SMSVSTGSQSS) shows a compositional bias: low complexity. At Thr-357 the chain carries Phosphothreonine. The residue at position 359 (Ser-359) is a Phosphoserine. Basic and acidic residues predominate over residues 405-416 (DEAGHGDPRPEP). Phosphoserine is present on Ser-442. Coiled-coil stretches lie at residues 452 to 502 (EQEN…THAN), 548 to 649 (FLES…HAML), and 754 to 879 (LKTL…DMES). A disordered region spans residues 565 to 596 (EEMNEDHSTPKKEKQERISKHKENLQHTQAEE). Position 830 is an N6-acetyllysine (Lys-830).

Belongs to the protein kinase superfamily. STE Ser/Thr protein kinase family. STE20 subfamily. As to quaternary structure, self-associates. Interacts with ERN1 and TRAF2. Interaction with TRAF2 is facilitated under ER stress conditions, such as treatment with tunicamycin, and may promote TRAF2 phosphorylation. Interacts (via N-terminus) with STK25; the interaction promotes STK25 abundance at the level of protein expression and/or stability. In terms of processing, autophosphorylated. Phosphorylation at Ser-324 by ATM following DNA damage is required for activation of the p38/MAPK14 stress-activated MAPK cascade. Phosphorylated at Ser-324 and on Tyr residues during T cell activation. Phosphorylated by LRRK2.

Its subcellular location is the cytoplasm. The protein localises to the cell membrane. The protein resides in the membrane raft. It is found in the lipid droplet. The catalysed reaction is L-seryl-[protein] + ATP = O-phospho-L-seryl-[protein] + ADP + H(+). It carries out the reaction L-threonyl-[protein] + ATP = O-phospho-L-threonyl-[protein] + ADP + H(+). Its function is as follows. Serine/threonine-protein kinase that acts as a regulator of the p38/MAPK14 stress-activated MAPK cascade and of the MAPK8/JNK cascade. In response to DNA damage, involved in the G2/M transition DNA damage checkpoint by activating the p38/MAPK14 stress-activated MAPK cascade, probably by mediating phosphorylation of upstream MAP2K3 and MAP2K6 kinases. Inhibits basal activity of the MAPK8/JNK cascade and diminishes its activation in response to epidermal growth factor (EGF). Positively regulates canonical T cell receptor (TCR) signaling by preventing early PTPN6/SHP1-mediated inactivation of LCK, ensuring sustained TCR signaling that is required for optimal activation and differentiation of T cells. Phosphorylates PTPN6/SHP1 on 'Thr-394', leading to its polyubiquitination and subsequent proteasomal degradation. Required for cell surface expression of metalloprotease ADAM10 on type 1 transitional B cells which is necessary for their NOTCH-mediated development into marginal zone B cells. Also required for the NOTCH-mediated terminal differentiation of splenic conventional type 2 dendritic cells. Positively regulates osteoblast differentiation by acting as an upstream activator of the JNK pathway. Promotes JNK signaling in hepatocytes and positively regulates hepatocyte lipid storage by inhibiting beta-oxidation and triacylglycerol secretion while enhancing lipid synthesis. Restricts age-associated inflammation by negatively regulating differentiation of macrophages and their production of pro-inflammatory cytokines. Plays a role in negatively regulating the abundance of regulatory T cells in white adipose tissue. The chain is Serine/threonine-protein kinase TAO3 (TAOK3) from Pongo abelii (Sumatran orangutan).